The following is a 448-amino-acid chain: UDP-N-acetylmuramoyl-L-alanine--L-glutamate ligase (448 aa).

118-124 serves as a coordination point for ATP; that stretch reads GSKGKST.

This sequence belongs to the MurCDEF family. MurD2 subfamily.

It is found in the cytoplasm. The catalysed reaction is UDP-N-acetyl-alpha-D-muramoyl-L-alanine + L-glutamate + ATP = UDP-N-acetyl-alpha-D-muramoyl-L-alanyl-L-glutamate + ADP + phosphate + H(+). The protein operates within cell wall biogenesis; peptidoglycan biosynthesis. Its function is as follows. Cell wall formation. Catalyzes the addition of L-glutamate to the nucleotide precursor UDP-N-acetylmuramoyl-L-alanine. This chain is UDP-N-acetylmuramoyl-L-alanine--L-glutamate ligase, found in Salinispora tropica (strain ATCC BAA-916 / DSM 44818 / JCM 13857 / NBRC 105044 / CNB-440).